We begin with the raw amino-acid sequence, 823 residues long: ATP-dependent RNA helicase HrpA (823 aa).

The Helicase ATP-binding domain occupies 16–179 (IKVLKNHNVL…FNNAPVVSIE (164 aa)). 29-36 (SPTGSGKT) lines the ATP pocket. The DEAH box motif lies at 126–129 (DEAH). The Helicase C-terminal domain occupies 203-374 (KIKEIVLNVI…EVVLRMADIG (172 aa)).

The protein belongs to the DEAD box helicase family. DEAH subfamily.

The catalysed reaction is ATP + H2O = ADP + phosphate + H(+). Its function is as follows. Has RNA-stimulated ATPase activity and RNA helicase activity. Involved in global regulation of gene expression. Could be involved in RNA processing and post-transcriptional gene regulation. Essential for both tick transmission and mouse infection. The protein is ATP-dependent RNA helicase HrpA of Borreliella burgdorferi (strain ATCC 35210 / DSM 4680 / CIP 102532 / B31) (Borrelia burgdorferi).